We begin with the raw amino-acid sequence, 969 residues long: RNA polymerase-associated protein RapA (969 aa).

The region spanning 164 to 334 (EVGRRHAPRV…FARLRLLDSD (171 aa)) is the Helicase ATP-binding domain. 177 to 184 (DEVGLGKT) contacts ATP. A DEAH box motif is present at residues 280–283 (DEAH). In terms of domain architecture, Helicase C-terminal spans 492–668 (RVNWLLEKLK…GSNEALDDVI (177 aa)).

The protein belongs to the SNF2/RAD54 helicase family. RapA subfamily. In terms of assembly, interacts with the RNAP. Has a higher affinity for the core RNAP than for the holoenzyme. Its ATPase activity is stimulated by binding to RNAP.

Transcription regulator that activates transcription by stimulating RNA polymerase (RNAP) recycling in case of stress conditions such as supercoiled DNA or high salt concentrations. Probably acts by releasing the RNAP, when it is trapped or immobilized on tightly supercoiled DNA. Does not activate transcription on linear DNA. Probably not involved in DNA repair. The polypeptide is RNA polymerase-associated protein RapA (Vibrio vulnificus (strain CMCP6)).